Reading from the N-terminus, the 162-residue chain is NADH-quinone oxidoreductase subunit I (162 aa).

2 4Fe-4S ferredoxin-type domains span residues 52 to 82 and 93 to 122; these read LRRYPNGEERCIACKLCEAICPAQAITIEAG and VRYDIDMVKCIYCGLCQEACPVDAIVEGPN. [4Fe-4S] cluster is bound by residues C62, C65, C68, C72, C102, C105, C108, and C112.

This sequence belongs to the complex I 23 kDa subunit family. NDH-1 is composed of 14 different subunits. Subunits NuoA, H, J, K, L, M, N constitute the membrane sector of the complex. Requires [4Fe-4S] cluster as cofactor.

Its subcellular location is the cell inner membrane. It carries out the reaction a quinone + NADH + 5 H(+)(in) = a quinol + NAD(+) + 4 H(+)(out). Functionally, NDH-1 shuttles electrons from NADH, via FMN and iron-sulfur (Fe-S) centers, to quinones in the respiratory chain. The immediate electron acceptor for the enzyme in this species is believed to be ubiquinone. Couples the redox reaction to proton translocation (for every two electrons transferred, four hydrogen ions are translocated across the cytoplasmic membrane), and thus conserves the redox energy in a proton gradient. This Afipia carboxidovorans (strain ATCC 49405 / DSM 1227 / KCTC 32145 / OM5) (Oligotropha carboxidovorans) protein is NADH-quinone oxidoreductase subunit I.